Consider the following 302-residue polypeptide: Dermonecrotic toxin LiSicTox-alphaIA2bii (302 aa).

The signal sequence occupies residues 1–14 (IALILVCWSVLSQA). A propeptide spanning residues 15 to 22 (AQTDVEGR) is cleaved from the precursor. H34 is a catalytic residue. Mg(2+) contacts are provided by E54 and D56. Catalysis depends on H70, which acts as the Nucleophile. Cystine bridges form between C74-C80 and C76-C219. D114 provides a ligand contact to Mg(2+). N279 carries N-linked (GlcNAc...) asparagine glycosylation.

It belongs to the arthropod phospholipase D family. Class II subfamily. Mg(2+) serves as cofactor. Expressed by the venom gland.

It is found in the secreted. The enzyme catalyses an N-(acyl)-sphingosylphosphocholine = an N-(acyl)-sphingosyl-1,3-cyclic phosphate + choline. It catalyses the reaction an N-(acyl)-sphingosylphosphoethanolamine = an N-(acyl)-sphingosyl-1,3-cyclic phosphate + ethanolamine. It carries out the reaction a 1-acyl-sn-glycero-3-phosphocholine = a 1-acyl-sn-glycero-2,3-cyclic phosphate + choline. The catalysed reaction is a 1-acyl-sn-glycero-3-phosphoethanolamine = a 1-acyl-sn-glycero-2,3-cyclic phosphate + ethanolamine. In terms of biological role, dermonecrotic toxins cleave the phosphodiester linkage between the phosphate and headgroup of certain phospholipids (sphingolipid and lysolipid substrates), forming an alcohol (often choline) and a cyclic phosphate. This toxin acts on sphingomyelin (SM). It may also act on ceramide phosphoethanolamine (CPE), lysophosphatidylcholine (LPC) and lysophosphatidylethanolamine (LPE), but not on lysophosphatidylserine (LPS), and lysophosphatidylglycerol (LPG). It acts by transphosphatidylation, releasing exclusively cyclic phosphate products as second products. Induces dermonecrosis, hemolysis, increased vascular permeability, edema, inflammatory response, and platelet aggregation. The chain is Dermonecrotic toxin LiSicTox-alphaIA2bii from Loxosceles intermedia (Brown spider).